A 440-amino-acid chain; its full sequence is Gap junction alpha-8 protein (440 aa).

Residues Gly2 to Glu12 lie within the membrane without spanning it. Residues Glu13–Ile21 are Cytoplasmic-facing. Residues Gly22–Glu42 form a helical membrane-spanning segment. The Extracellular portion of the chain corresponds to Phe43–Pro71. 3 cysteine pairs are disulfide-bonded: Cys54-Cys201, Cys61-Cys195, and Cys65-Cys190. Residues Ile72–Tyr92 traverse the membrane as a helical segment. Over Val93–His161 the chain is Cytoplasmic. The interval Glu108 to Gly144 is disordered. Residues Ile162–Phe182 form a helical membrane-spanning segment. Residues Arg183 to Thr210 are Extracellular-facing. The chain crosses the membrane as a helical span at residues Ile211 to Met231. At Ser232–Val440 the chain is on the cytoplasmic side. The interval Gly334–Val440 is disordered. Basic and acidic residues-rich tracts occupy residues Val353 to Thr365 and Glu375 to Pro405. Positions Leu423–Arg432 are enriched in low complexity.

It belongs to the connexin family. Alpha-type (group II) subfamily. As to quaternary structure, a hemichannel or connexon is composed of a hexamer of connexins. A functional gap junction is formed by the apposition of two hemichannels. Forms heteromeric channels with GJA3. Detected in eye lens (at protein level). Eye lens.

It localises to the cell membrane. The protein resides in the cell junction. It is found in the gap junction. Structural component of eye lens gap junctions. Gap junctions are dodecameric channels that connect the cytoplasm of adjoining cells. They are formed by the docking of two hexameric hemichannels, one from each cell membrane. Small molecules and ions diffuse from one cell to a neighboring cell via the central pore. The sequence is that of Gap junction alpha-8 protein (GJA8) from Ovis aries (Sheep).